The sequence spans 94 residues: Co-chaperonin GroES (94 aa).

It belongs to the GroES chaperonin family. In terms of assembly, heptamer of 7 subunits arranged in a ring. Interacts with the chaperonin GroEL.

It is found in the cytoplasm. Together with the chaperonin GroEL, plays an essential role in assisting protein folding. The GroEL-GroES system forms a nano-cage that allows encapsulation of the non-native substrate proteins and provides a physical environment optimized to promote and accelerate protein folding. GroES binds to the apical surface of the GroEL ring, thereby capping the opening of the GroEL channel. This Lactobacillus delbrueckii subsp. bulgaricus (strain ATCC BAA-365 / Lb-18) protein is Co-chaperonin GroES.